The sequence spans 482 residues: E3 ubiquitin-protein ligase makorin-1 (482 aa).

A compositionally biased stretch (low complexity) spans 26–38 (ASPTPIPTVTAPS). Positions 26–52 (ASPTPIPTVTAPSLGAGGGGGGSDGSG) are disordered. The segment covering 40–52 (GAGGGGGGSDGSG) has biased composition (gly residues). 3 consecutive C3H1-type zinc fingers follow at residues 55–82 (WTKQ…HDLS), 84–111 (SPYS…HSKP), and 208–235 (ETKK…HGDS). Positions 236–263 (CDMCGLQVLHPMDAAQRSQHIKSCIEAH) are makorin-type Cys-His. The RING-type zinc-finger motif lies at 281-335 (CGICMEVVYEKANPSERRFGILSNCNHTYCLKCIRKWRSAKQFESKIIKSCPECR). The segment at 364–393 (AMSNKACRYFDEGRGSCPFGGNCFYKHAYP) adopts a C3H1-type 4 zinc-finger fold.

Interacts with p53/TP53 and CDKN1A. Interacts with TERT, modulating telomere length homeostasis. Post-translationally, auto-ubiquitinated; which leads to proteasomal degradation. Ubiquitous.

It catalyses the reaction S-ubiquitinyl-[E2 ubiquitin-conjugating enzyme]-L-cysteine + [acceptor protein]-L-lysine = [E2 ubiquitin-conjugating enzyme]-L-cysteine + N(6)-ubiquitinyl-[acceptor protein]-L-lysine.. It functions in the pathway protein modification; protein ubiquitination. E3 ubiquitin ligase catalyzing the covalent attachment of ubiquitin moieties onto substrate proteins. These substrates include FILIP1, p53/TP53, CDKN1A and TERT. Keeps cells alive by suppressing p53/TP53 under normal conditions, but stimulates apoptosis by repressing CDKN1A under stress conditions. Acts as a negative regulator of telomerase. Has negative and positive effects on RNA polymerase II-dependent transcription. The protein is E3 ubiquitin-protein ligase makorin-1 (MKRN1) of Homo sapiens (Human).